The primary structure comprises 187 residues: Calcium and integrin-binding family member 2 (187 aa).

EF-hand domains lie at 66 to 101 (RENPFKERIVEAFSEDGEGNLTFNDFVDMFSVLCES), 103 to 138 (PRELKANYAFKIYDFNTDNFICKEDLEMTLARLTKS), and 144 to 179 (EVVLVCDKVIEEADLDGDGKLGFADFEDMIAKAPDF). Asp-116, Asn-118, Asp-120, Asp-127, Asp-157, Asp-159, Asp-161, Lys-163, and Asp-168 together coordinate Ca(2+).

In terms of assembly, monomer. Homodimer. Interacts with WHRN and MYO7A. Interacts with ITGA2B (via C-terminus cytoplasmic tail region); this interaction is stabilized/increased in a calcium and magnesium-dependent manner. Interacts with ITGA7 (via C-terminus cytoplasmic tail region); this interaction is stabilized/increased in a calcium and magnesium-dependent manner. Interacts with TMC1. Interacts with TMC2. Interacts with PIEZO1. As to expression, expressed in inner and outer segments of photoreceptor cells, as well as in the pigmented epithelium. Also observed in the inner and outer plexiform layers and in the ganglion cell layer (at protein level). Expressed in sensory hair cell stereocilia, with expression mainly at the basal body of the kinocilium and in the hair bundle stereocilia; and the apical surface of hair cells (at protein level). Located in the tip region of the stereocilia and at the apical surface of hair cells around the cuticular plate (at protein level). Not expressed in the hair bundles of the vestibular hair cells. Strongly expressed in skeletal muscles, brain, kidney and liver. Expressed in the skeletal muscle, retina and cochlea. Expressed in megakaryocytes and endothelial cells. Expressed in heart, spleen, lung, and inner ear. In the inner ear, expressed in the vestibule, basilar membrane and spiral ganglion cells. Expressed in the supporting cells in both the organ of Corti and the vestibular sensory epithelia.

Its subcellular location is the cytoplasm. The protein localises to the cell projection. It is found in the stereocilium. The protein resides in the photoreceptor inner segment. It localises to the cilium. Its subcellular location is the photoreceptor outer segment. The protein localises to the cell membrane. It is found in the sarcolemma. Functionally, calcium- and integrin-binding protein that plays a role in intracellular calcium homeostasis. Acts as an auxiliary subunit of the sensory mechanoelectrical transduction (MET) channel in hair cells. Essential for mechanoelectrical transduction (MET) currents in auditory hair cells and thereby required for hearing. Regulates the function of hair cell mechanotransduction by controlling the distribution of transmembrane channel-like proteins TMC1 and TMC2, and by regulating the function of the MET channels in hair cells. Required for the maintenance of auditory hair cell stereocilia bundle morphology and function and for hair-cell survival in the cochlea. Critical for proper photoreceptor cell maintenance and function. Plays a role in intracellular calcium homeostasis by decreasing ATP-induced calcium release. Seems to be dispensable for vestibular functions. This is Calcium and integrin-binding family member 2 (Cib2) from Mus musculus (Mouse).